We begin with the raw amino-acid sequence, 177 residues long: Peptide methionine sulfoxide reductase MsrA (177 aa).

Cys15 is an active-site residue.

The protein belongs to the MsrA Met sulfoxide reductase family.

The catalysed reaction is L-methionyl-[protein] + [thioredoxin]-disulfide + H2O = L-methionyl-(S)-S-oxide-[protein] + [thioredoxin]-dithiol. The enzyme catalyses [thioredoxin]-disulfide + L-methionine + H2O = L-methionine (S)-S-oxide + [thioredoxin]-dithiol. In terms of biological role, has an important function as a repair enzyme for proteins that have been inactivated by oxidation. Catalyzes the reversible oxidation-reduction of methionine sulfoxide in proteins to methionine. The sequence is that of Peptide methionine sulfoxide reductase MsrA from Listeria monocytogenes serotype 4b (strain CLIP80459).